We begin with the raw amino-acid sequence, 277 residues long: 3-methyl-2-oxobutanoate hydroxymethyltransferase (277 aa).

The Mg(2+) site is built by aspartate 43 and aspartate 82. 3-methyl-2-oxobutanoate-binding positions include aspartate 43–serine 44, aspartate 82, and lysine 112. Mg(2+) is bound at residue glutamate 114. Catalysis depends on glutamate 181, which acts as the Proton acceptor.

It belongs to the PanB family. Homodecamer; pentamer of dimers. The cofactor is Mg(2+).

It localises to the cytoplasm. It catalyses the reaction 3-methyl-2-oxobutanoate + (6R)-5,10-methylene-5,6,7,8-tetrahydrofolate + H2O = 2-dehydropantoate + (6S)-5,6,7,8-tetrahydrofolate. It functions in the pathway cofactor biosynthesis; (R)-pantothenate biosynthesis; (R)-pantoate from 3-methyl-2-oxobutanoate: step 1/2. In terms of biological role, catalyzes the reversible reaction in which hydroxymethyl group from 5,10-methylenetetrahydrofolate is transferred onto alpha-ketoisovalerate to form ketopantoate. The sequence is that of 3-methyl-2-oxobutanoate hydroxymethyltransferase from Listeria monocytogenes serovar 1/2a (strain ATCC BAA-679 / EGD-e).